The sequence spans 223 residues: Ribonuclease T (223 aa).

Residues 20-194 (VVIDVETAGF…YDTERTAELF (175 aa)) enclose the Exonuclease domain. Mg(2+)-binding residues include aspartate 23, glutamate 25, histidine 181, and aspartate 186. Histidine 181 acts as the Proton donor/acceptor in catalysis.

It belongs to the RNase T family. As to quaternary structure, homodimer. The cofactor is Mg(2+).

Its function is as follows. Trims short 3' overhangs of a variety of RNA species, leaving a one or two nucleotide 3' overhang. Responsible for the end-turnover of tRNA: specifically removes the terminal AMP residue from uncharged tRNA (tRNA-C-C-A). Also appears to be involved in tRNA biosynthesis. The chain is Ribonuclease T from Shewanella sp. (strain W3-18-1).